The chain runs to 531 residues: 4-hydroxyphenylacetaldehyde oxime monooxygenase (531 aa).

The helical transmembrane segment at 18–38 threads the bilayer; sequence WQTCLLVLLPVLLVSYYLLTS. Positions 122, 151, 466, and 468 each coordinate heme b.

It belongs to the cytochrome P450 family. It depends on heme b as a cofactor.

It is found in the endoplasmic reticulum membrane. It catalyses the reaction (E)-4-hydroxyphenylacetaldehyde oxime + reduced [NADPH--hemoprotein reductase] + O2 = (S)-4-hydroxymandelonitrile + oxidized [NADPH--hemoprotein reductase] + 2 H2O + H(+). It carries out the reaction (E)-4-hydroxyphenylacetaldehyde oxime = (Z)-(4-hydroxyphenyl)acetaldehyde oxime. The enzyme catalyses (Z)-(4-hydroxyphenyl)acetaldehyde oxime = 4-hydroxyphenylacetonitrile + H2O. The catalysed reaction is 4-hydroxyphenylacetonitrile + reduced [NADPH--hemoprotein reductase] + O2 = (S)-4-hydroxymandelonitrile + oxidized [NADPH--hemoprotein reductase] + H2O + H(+). It functions in the pathway secondary metabolite biosynthesis; dhurrin biosynthesis; dhurrin from L-tyrosine: step 2/3. Cytochrome P450 involved in the biosynthesis of the cyanogenic glucoside dhurrin. Catalyzes the conversion of p-hydroxyphenylacetaldoxime to p-hydroxymandelonitrile via three different and successive activities: isomerization of the (E) isomer to the (Z) isomer of p-hydroxyphenylacetaldoxime, followed by dehydration of the oxime to the corresponding nitrile, and C-hydroxylation of the nitrile to produce p-hydroxymandelonitrile. This chain is 4-hydroxyphenylacetaldehyde oxime monooxygenase, found in Sorghum bicolor (Sorghum).